Reading from the N-terminus, the 92-residue chain is Small ribosomal subunit protein uS19 (92 aa).

Positions E73–R92 are disordered.

Belongs to the universal ribosomal protein uS19 family.

Its function is as follows. Protein S19 forms a complex with S13 that binds strongly to the 16S ribosomal RNA. This Maricaulis maris (strain MCS10) (Caulobacter maris) protein is Small ribosomal subunit protein uS19.